Consider the following 496-residue polypeptide: Cytochrome P450 71D180 (496 aa).

The helical; Signal-anchor for type II membrane protein transmembrane segment at 1–21 (MDISISWVVIIVFVLSYLILM) threads the bilayer. Residue C435 participates in heme binding. The tract at residues 471 to 496 (MSETPGLSGPRKNPLIMIPTIHNPTS) is disordered.

Belongs to the cytochrome P450 family. Heme is required as a cofactor.

It localises to the membrane. The catalysed reaction is gamma-terpinene + 2 reduced [NADPH--hemoprotein reductase] + 2 O2 = carvacrol + 2 oxidized [NADPH--hemoprotein reductase] + 3 H2O + 2 H(+). It carries out the reaction (4S)-limonene + reduced [NADPH--hemoprotein reductase] + O2 = (1S,5R)-carveol + oxidized [NADPH--hemoprotein reductase] + H2O + H(+). The enzyme catalyses (4R)-limonene + reduced [NADPH--hemoprotein reductase] + O2 = (1R,5S)-carveol + oxidized [NADPH--hemoprotein reductase] + H2O + H(+). The protein operates within secondary metabolite biosynthesis; terpenoid biosynthesis. Involved in the biosynthesis of phenolic monoterpenes natural products thymol and carvacrol which have a broad range of biological activities acting as antimicrobial compounds, insecticides, antioxidants and pharmaceutical agents. Catalyzes the C2-hydroxylation of gamma-terpinene to produce carvacrol. Mediates also the C6-hydroxylation of (4S)-limonene and (4R)-limonene to form carveol. The sequence is that of Cytochrome P450 71D180 from Origanum majorana (Sweet marjoram).